The chain runs to 246 residues: Chlorophyll a-b binding protein 6A, chloroplastic (246 aa).

The N-terminal 45 residues, 1–45 (MASNTLMSCGIPAVCPSFLSSTKSKFAAAMPVYVGATNFMSRFSM), are a transit peptide targeting the chloroplast. W49 lines the chlorophyll b pocket. Positions 69, 88, and 91 each coordinate chlorophyll a. R93 contributes to the chlorophyll b binding site. Residues 94–114 (WAMLAVPGIIVPEALGLGNWV) form a helical membrane-spanning segment. Residue L130 coordinates chlorophyll a. The chain crosses the membrane as a helical span at residues 133–153 (PVPWGTLPTILAIEFLAIAFV). Residues V134, E154, and R157 each coordinate chlorophyll b. Chlorophyll a is bound by residues K191, E192, N195, R197, Q209, and H225.

It belongs to the light-harvesting chlorophyll a/b-binding (LHC) protein family. In terms of assembly, the LHC complex consists of chlorophyll a-b binding proteins. Requires Binds at least 14 chlorophylls (8 Chl-a and 6 Chl-b) and carotenoids such as lutein and neoxanthin. as cofactor. Photoregulated by reversible phosphorylation of its threonine residues.

The protein resides in the plastid. The protein localises to the chloroplast thylakoid membrane. The light-harvesting complex (LHC) functions as a light receptor, it captures and delivers excitation energy to photosystems with which it is closely associated. The sequence is that of Chlorophyll a-b binding protein 6A, chloroplastic (CAB6A) from Solanum lycopersicum (Tomato).